A 599-amino-acid polypeptide reads, in one-letter code: DNA-directed RNA polymerase III subunit RPC3 (599 aa).

The segment at 335 to 371 is disordered; that stretch reads PRLDGLRPRGKGSRSVSPRPQSKRVKTEEGYTKTGDY. Residues 359 to 371 show a composition bias toward basic and acidic residues; the sequence is VKTEEGYTKTGDY. Residues 526-547 form a leucine-zipper region; the sequence is IYKSLSRCFERVAAERAKLPIL.

The protein belongs to the RNA polymerase beta chain family. As to quaternary structure, component of the RNA polymerase III (Pol III) complex consisting of 17 subunits.

The protein localises to the nucleus. DNA-dependent RNA polymerase catalyzes the transcription of DNA into RNA using the four ribonucleoside triphosphates as substrates. Specific core component of RNA polymerase III which synthesizes small RNAs, such as 5S rRNA and tRNAs. This chain is DNA-directed RNA polymerase III subunit RPC3 (RPC82), found in Yarrowia lipolytica (strain CLIB 122 / E 150) (Yeast).